The following is a 93-amino-acid chain: MENDRQAIVVWMNHLKQVRSLKRFGNVHYVSRKLKYAVLYCDMAEVEDISNKVSRFHYVKRVEMSFRPFLKTEYESKKEMMYEHKNEDVQISI.

Belongs to the UPF0298 family.

The protein resides in the cytoplasm. The polypeptide is UPF0298 protein LMHCC_0506 (Listeria monocytogenes serotype 4a (strain HCC23)).